Consider the following 424-residue polypeptide: Synaptotagmin-1 (424 aa).

Topologically, residues 1-60 are vesicular; that stretch reads MVSESHHEALAAPPATTVAAALPSNVTEPAAPGGGGGKEDAFSNLKKKFMNELNKIPLPP. Asn-25 carries an N-linked (GlcNAc...) asparagine glycan. Residues 61–82 traverse the membrane as a helical segment; that stretch reads WALIAIAIVAVLLILTCCFCLC. S-palmitoyl cysteine attachment occurs at residues Cys-77, Cys-78, Cys-80, Cys-82, and Cys-85. Over 83 to 424 the chain is Cytoplasmic; the sequence is KKCLFKKKNK…EVDAMLAVKK (342 aa). Residues 117–142 form a disordered region; the sequence is KDQALKDDDAETGLTDGEEKEEPKEV. The span at 124–136 shows a compositional bias: acidic residues; sequence DDAETGLTDGEEK. The phospholipid binding stretch occupies residues 138-384; that stretch reads EPKEVEKLGK…AIGKVFVGYN (247 aa). 2 consecutive C2 domains span residues 144-263 and 275-408; these read KLGK…EEWR and KLGD…AQWH. Residues Leu-174, Asp-175, Asp-181, Asp-233, Phe-234, Asp-235, Ser-238, Lys-239, Asp-241, Asp-306, Asp-312, Asp-366, Asp-368, and Asp-374 each contribute to the Ca(2+) site.

Belongs to the synaptotagmin family. In terms of assembly, homotetramer. It depends on Ca(2+) as a cofactor.

The protein localises to the cytoplasmic vesicle. It is found in the secretory vesicle membrane. The protein resides in the secretory vesicle. Its subcellular location is the synaptic vesicle membrane. It localises to the chromaffin granule membrane. The protein localises to the cytoplasm. Calcium sensor that participates in triggering neurotransmitter release at the synapse. May have a regulatory role in the membrane interactions during trafficking of synaptic vesicles at the active zone of the synapse. It binds acidic phospholipids with a specificity that requires the presence of both an acidic head group and a diacyl backbone. May play a role in dendrite formation by melanocytes. The protein is Synaptotagmin-1 (SYT1) of Gallus gallus (Chicken).